A 2586-amino-acid chain; its full sequence is Highly reducing polyketide synthase FUM1 (2586 aa).

Residues 29–451 (VLPVAIVGMG…GANAHCIIET (423 aa)) enclose the Ketosynthase family 3 (KS3) domain. Active-site for beta-ketoacyl synthase activity residues include cysteine 201, histidine 336, and histidine 374. Positions 609–928 (IFTGQGAQWV…TESLLKLAGE (320 aa)) are malonyl-CoA:ACP transacylase (MAT) domain. The segment at 980 to 1111 (HELLGSRTLE…GQVRPGQDAH (132 aa)) is N-terminal hotdog fold. The segment at 980–1269 (HELLGSRTLE…LEDGKFSPLE (290 aa)) is dehydratase (DH) domain. The 295-residue stretch at 980–1274 (HELLGSRTLE…FSPLEMDLAE (295 aa)) folds into the PKS/mFAS DH domain. The active-site Proton acceptor; for dehydratase activity is histidine 1012. A C-terminal hotdog fold region spans residues 1125 to 1274 (QHYPRLVDNL…FSPLEMDLAE (150 aa)). Aspartate 1186 (proton donor; for dehydratase activity) is an active-site residue. The methyltransferase (CMet) domain stretch occupies residues 1450-1627 (DFFATAGHTR…GFSGVDSAIY (178 aa)). Residues 1862–2172 (GLLQTLGWVP…KGVHLGKIVV (311 aa)) are enoyl reductase (ER) (ER) domain. The segment at 2197–2373 (ASYLLVGGLG…ASVLQIGLIE (177 aa)) is ketoreductase (KR) domain. The Carrier domain occupies 2486–2565 (PATVELVTNE…GLARLTVDGL (80 aa)). Serine 2524 is subject to O-(pantetheine 4'-phosphoryl)serine.

The protein operates within mycotoxin biosynthesis. Its function is as follows. Highly reducing polyketide synthase; part of the gene cluster that mediates the biosynthesis of fumonisins B1 (FB1), B2 (FB2), B3 (FB3), and B4 (FB4), which are carcinogenic mycotoxins. The biosynthesis starts with the FUM1-catalyzed carbon chain assembly from one molecule of acetyl-CoA, eight molecules of malonyl-CoA, and two molecules of methionine (in S-adenosyl form). The C18 polyketide chain is released from the enzyme by a nucleophilic attack of a carbanion, which is derived from R-carbon of alanine by decarboxylation, on the carbonyl carbon of polyketide acyl chain. This step is catalyzed by the pyridoxal 5'-phosphate-dependent aminoacyl transferase FUM8. The resultant 3-keto intermediate is then stereospecifically reduced to a 3-hydroxyl product by reductase FUM13. Subsequent oxidations at C-10 by the cytochrome P450 monooxygenase FUM2, C-14 and C-15 by FUM6, FUM12 or FUM15, tricarballylic esterification of the hydroxyl groups on C-14 and C-15 by acyltransferase FUM14, and C-5 hydroxylation by 2-keto-glutarate-dependent dioxygenase FUM3 furnish the biosynthesis of fumonisins. The tricarballylic moieties are most likely derived from the citric acid cycle, and their addition to the carbon backbone may involve FUM7, FUM10, FUM11 and FUM14. The sequence is that of Highly reducing polyketide synthase FUM1 from Gibberella moniliformis (strain M3125 / FGSC 7600) (Maize ear and stalk rot fungus).